A 107-amino-acid polypeptide reads, in one-letter code: EMBRYO SURROUNDING FACTOR 1-like protein 5 (107 aa).

The first 22 residues, 1 to 22, serve as a signal peptide directing secretion; it reads MSLLRFAILCIIFVSLFGVHEC. Intrachain disulfides connect cysteine 35/cysteine 49, cysteine 40/cysteine 69, cysteine 47/cysteine 65, and cysteine 50/cysteine 58. Residues 87 to 107 traverse the membrane as a helical segment; sequence GLGPPIYLFFLGQFIYFVLGL.

Belongs to the MEG family. As to expression, expressed in flowers.

It localises to the membrane. This Arabidopsis thaliana (Mouse-ear cress) protein is EMBRYO SURROUNDING FACTOR 1-like protein 5 (ESFL5).